A 339-amino-acid chain; its full sequence is MSLPQTYKRAVFKELGHPLTVEDAPLKLPGPNELLIKVEACGVCYSDMYSQYNGLGGGFPIVPGHEIIGKVAVVGSEVRDWNVGQRIGAGWHGGHDGTCKACKQGYFQMCDSTAVNGATKEGGYAEYTLIRSESAVHIPANVDAASYAPILCAGLTVFNSIRNVNIRAGETVAVQGLGGLGHLAIQYAKRMGYRVVAISRGPEKEAAARELGADEYIDSNEGDSGEQLAALGGAALAVTTASTGEAITPLLKGLGILGKLLVLSFPSNLTLEPTDLLKYGLSVHFWPSGHPSDAEDAVRFAENTNIASVVEKFPLEQAQQAFESMLSGKVRFRAVITMD.

7 residues coordinate Zn(2+): Cys-44, His-65, Glu-66, Cys-99, Cys-102, Cys-110, and Cys-152. His-65 lines the an alcohol pocket. Residues 176–181 (GLGGLG), 196–201 (VAISRG), Lys-204, 263–265 (LSF), 287–289 (PSG), and 295–297 (EDA) contribute to the NAD(+) site.

It belongs to the zinc-containing alcohol dehydrogenase family. It depends on Zn(2+) as a cofactor.

The enzyme catalyses a primary alcohol + NAD(+) = an aldehyde + NADH + H(+). It catalyses the reaction a secondary alcohol + NAD(+) = a ketone + NADH + H(+). Its function is as follows. Alcohol dehydrogenase; part of the gene cluster that mediates the biosynthesis of notoamide, a fungal indole alkaloid that belongs to a family of natural products containing a characteristic bicyclo[2.2.2]diazaoctane core. The first step of notoamide biosynthesis involves coupling of L-proline and L-tryptophan by the bimodular NRPS notE, to produce cyclo-L-tryptophan-L-proline called brevianamide F. The reverse prenyltransferase notF then acts as a deoxybrevianamide E synthase and converts brevianamide F to deoxybrevianamide E via reverse prenylation at C-2 of the indole ring leading to the bicyclo[2.2.2]diazaoctane core. Deoxybrevianamide E is further hydroxylated at C-6 of the indole ring, likely catalyzed by the cytochrome P450 monooxygenase notG, to yield 6-hydroxy-deoxybrevianamide E. 6-hydroxy-deoxybrevianamide E is a specific substrate of the prenyltransferase notC for normal prenylation at C-7 to produce 6-hydroxy-7-prenyl-deoxybrevianamide, also called notoamide S. As the proposed pivotal branching point in notoamide biosynthesis, notoamide S can be diverted to notoamide E through an oxidative pyran ring closure putatively catalyzed by either notH cytochrome P450 monooxygenase or the notD FAD-linked oxidoreductase. This step would be followed by an indole 2,3-epoxidation-initiated pinacol-like rearrangement catalyzed by the notB FAD-dependent monooxygenase leading to the formation of notoamide C and notoamide D. On the other hand notoamide S is converted to notoamide T by notH (or notD), a bifunctional oxidase that also functions as the intramolecular Diels-Alderase responsible for generation of (+)-notoamide T. To generate antipodal (-)-notoaminide T, notH' (or notD') in Aspergillus versicolor is expected to catalyze a Diels-Alder reaction leading to the opposite stereochemistry. The remaining oxidoreductase notD (or notH) likely catalyzes the oxidative pyran ring formation to yield (+)-stephacidin A. The FAD-dependent monooxygenase notI is highly similar to notB and is predicted to catalyze a similar conversion from (+)-stephacidin A to (-)-notoamide B via the 2,3-epoxidation of (+)-stephacidin A followed by a pinacol-type rearrangement. Finally, it remains unclear which enzyme could be responsible for the final hydroxylation steps leading to notoamide A and sclerotiamide. The function of notN in the notoamide biosynthesis has not been determined yet. This Aspergillus sp. (strain MF297-2) protein is Alcohol dehydrogenase notN.